The chain runs to 97 residues: MANMLRSWMMLAALAVCLLVCLSSFADAYPPKPESPGSNASPEDWAKYHAAVRHYVNLITRQRYGKRSTPEQAVAWLLFGADSSQDAEPRLDYSDQW.

An N-terminal signal peptide occupies residues 1 to 28 (MANMLRSWMMLAALAVCLLVCLSSFADA). A Tyrosine amide modification is found at Y64. A propeptide spans 68–97 (STPEQAVAWLLFGADSSQDAEPRLDYSDQW) (C-terminal extension).

Belongs to the NPY family.

The protein localises to the secreted. This Dicentrarchus labrax (European seabass) protein is Peptide Y.